The chain runs to 238 residues: tRNA (guanine-N(7)-)-methyltransferase (238 aa).

S-adenosyl-L-methionine is bound by residues glutamate 68, glutamate 93, aspartate 120, and aspartate 143. Aspartate 143 is an active-site residue. Substrate contacts are provided by residues lysine 147, aspartate 179, and 216 to 219 (TKFE).

It belongs to the class I-like SAM-binding methyltransferase superfamily. TrmB family.

The catalysed reaction is guanosine(46) in tRNA + S-adenosyl-L-methionine = N(7)-methylguanosine(46) in tRNA + S-adenosyl-L-homocysteine. It functions in the pathway tRNA modification; N(7)-methylguanine-tRNA biosynthesis. Functionally, catalyzes the formation of N(7)-methylguanine at position 46 (m7G46) in tRNA. This Stutzerimonas stutzeri (strain A1501) (Pseudomonas stutzeri) protein is tRNA (guanine-N(7)-)-methyltransferase.